The sequence spans 193 residues: Peptidyl-tRNA hydrolase (193 aa).

Residue Tyr-17 coordinates tRNA. His-22 functions as the Proton acceptor in the catalytic mechanism. 3 residues coordinate tRNA: Tyr-68, Asn-70, and Asn-116.

It belongs to the PTH family. As to quaternary structure, monomer.

It is found in the cytoplasm. It catalyses the reaction an N-acyl-L-alpha-aminoacyl-tRNA + H2O = an N-acyl-L-amino acid + a tRNA + H(+). Functionally, hydrolyzes ribosome-free peptidyl-tRNAs (with 1 or more amino acids incorporated), which drop off the ribosome during protein synthesis, or as a result of ribosome stalling. In terms of biological role, catalyzes the release of premature peptidyl moieties from peptidyl-tRNA molecules trapped in stalled 50S ribosomal subunits, and thus maintains levels of free tRNAs and 50S ribosomes. The polypeptide is Peptidyl-tRNA hydrolase (Chromobacterium violaceum (strain ATCC 12472 / DSM 30191 / JCM 1249 / CCUG 213 / NBRC 12614 / NCIMB 9131 / NCTC 9757 / MK)).